The following is a 360-amino-acid chain: Phenylalanine--tRNA ligase alpha subunit (360 aa).

A Mg(2+)-binding site is contributed by Glu260.

It belongs to the class-II aminoacyl-tRNA synthetase family. Phe-tRNA synthetase alpha subunit type 1 subfamily. As to quaternary structure, tetramer of two alpha and two beta subunits. The cofactor is Mg(2+).

It localises to the cytoplasm. It catalyses the reaction tRNA(Phe) + L-phenylalanine + ATP = L-phenylalanyl-tRNA(Phe) + AMP + diphosphate + H(+). The polypeptide is Phenylalanine--tRNA ligase alpha subunit (Paracoccus denitrificans (strain Pd 1222)).